We begin with the raw amino-acid sequence, 115 residues long: Waprin-like protein (115 aa).

The first 21 residues, 1-21 (MNRSLLAFAIVLVLLVAGTSS), serve as a signal peptide directing secretion. The WAP domain maps to 23 to 69 (LFNKSGNCPMRNTVTSCTPRCIGDGECSSNQKCCPNKCGTTSCANSS). Cystine bridges form between Cys-30/Cys-56, Cys-39/Cys-60, Cys-43/Cys-55, and Cys-49/Cys-65.

It belongs to the venom waprin family. Cys-rich waprin subfamily. Expressed by the venom gland.

The protein resides in the secreted. Antimicrobial peptides with activity against Gram-positive and Gram-negative bacteria as well as fungi. Recognizes carbohydrates in the microbial cell walls, and induces structural damage to them. Also inhibits microbial serine proteases, as well as mammalian elastases. Carbohydrates that are recognized are LPS, mannan, peptidoglycan, and N-acetl-D-glucosamine. The protein is Waprin-like protein of Tetramorium bicarinatum (Tramp ant).